The sequence spans 286 residues: MILLDGKATAAAVREELKKDVDALKDRAGRAPGLAVILVGDDPASQVYVRNKERACADAGIRSEAFRISAQTTQQELEERIAALNAREDIDGILLQLPLPAGLDSQRCLELIDPAKDVDGFHPVNMGKLTLGLPGFRPCTPAGVMTLLERYNLSPAGKKAVVLGRSNIVGKPLALMLGASGPFANATVTVCHSRTPDLAQQCREADFLFVAIGRANFVTADMVKPGAVVVDVGINRTENGLAGDVDFGPVSKVASAITPVPGGIGPMTIAQLLVNTVASWKKRCGV.

NADP(+) is bound by residues 164–166, S193, and I234; that span reads GRS.

This sequence belongs to the tetrahydrofolate dehydrogenase/cyclohydrolase family. In terms of assembly, homodimer.

The enzyme catalyses (6R)-5,10-methylene-5,6,7,8-tetrahydrofolate + NADP(+) = (6R)-5,10-methenyltetrahydrofolate + NADPH. The catalysed reaction is (6R)-5,10-methenyltetrahydrofolate + H2O = (6R)-10-formyltetrahydrofolate + H(+). It functions in the pathway one-carbon metabolism; tetrahydrofolate interconversion. In terms of biological role, catalyzes the oxidation of 5,10-methylenetetrahydrofolate to 5,10-methenyltetrahydrofolate and then the hydrolysis of 5,10-methenyltetrahydrofolate to 10-formyltetrahydrofolate. In Oleidesulfovibrio alaskensis (strain ATCC BAA-1058 / DSM 17464 / G20) (Desulfovibrio alaskensis), this protein is Bifunctional protein FolD.